The chain runs to 453 residues: Secreted triacylglycerol lipase LIP3 (453 aa).

A signal peptide spans 1 to 19 (MKLGIVAFTLISFAAQALA). N-linked (GlcNAc...) asparagine glycosylation occurs at N98. A disulfide bridge links C115 with C284. S197 serves as the catalytic Nucleophile. A glycan (N-linked (GlcNAc...) asparagine) is linked at N230. Catalysis depends on residues D344 and H378. A disulfide bridge connects residues C360 and C406.

The protein belongs to the AB hydrolase superfamily. Lipase family. Class Lip subfamily.

It is found in the secreted. The protein localises to the cell wall. The enzyme catalyses a triacylglycerol + H2O = a diacylglycerol + a fatty acid + H(+). It carries out the reaction a monoacylglycerol + H2O = glycerol + a fatty acid + H(+). The catalysed reaction is a diacylglycerol + H2O = a monoacylglycerol + a fatty acid + H(+). Functionally, secreted lipase involved in Dandruff and seborrheic dermatitis (D/SD) probably via lipase-mediated breakdown of sebaceous lipids and release of irritating free fatty acids. Has triacylglycerol lipase activity and is able to hydrolyze triolein, tristearin, trilinolein, tripalmitoylglycerol and trihexadecenoin. Hydrolyzes diacylglycerols such as distearin, dilinolein, dipalmitoylglycerol and dipalmitolein. Mostly converts monoolein to di- and triolein, while free fatty acids are only produced in low amounts. The polypeptide is Secreted triacylglycerol lipase LIP3 (Malassezia globosa (strain ATCC MYA-4612 / CBS 7966) (Dandruff-associated fungus)).